A 1875-amino-acid polypeptide reads, in one-letter code: Protein MLP1 (1875 aa).

Position 2 is an N-acetylserine (S2). 2 coiled-coil regions span residues 69–487 (ELKA…IQYL) and 531–1678 (ERLV…SAES). T337 carries the post-translational modification Phosphothreonine. At S379 the chain carries Phosphoserine. A Required for nuclear localization motif is present at residues 1496 to 1565 (QPSNINMEEI…EEKVEERIKS (70 aa)). A disordered region spans residues 1641 to 1689 (KKSFDEGKQQAMMKTTLLERKLAKMESQLSETKQSAESPPKSVNNVQNP). Residues 1667-1688 (SQLSETKQSAESPPKSVNNVQN) are compositionally biased toward polar residues. A phosphoserine mark is found at S1670 and S1710. Residues 1716–1725 (KLNSKSSSGG) show a composition bias toward low complexity. The tract at residues 1716 to 1875 (KLNSKSSSGG…TDKVNDENSI (160 aa)) is disordered. Residues 1728 to 1737 (PFTSPSPNKH) are compositionally biased toward polar residues. S1733 is subject to Phosphoserine. The segment covering 1738-1748 (LQNDNDKRESL) has biased composition (basic and acidic residues). Over residues 1787–1801 (TSNNPAQKDSSNRNV) the composition is skewed to polar residues. S1803 is modified (phosphoserine). Composition is skewed to basic and acidic residues over residues 1807-1840 (TEKKKEGEPVKRGEAIEEQTKSNKRPIDEVGELK) and 1865-1875 (ETDKVNDENSI). A coiled-coil region spans residues 1834-1866 (DEVGELKNDEDDTTENINESKKIKTEDEEEKET).

As to quaternary structure, component of the nuclear pore complex (NPC). NPC constitutes the exclusive means of nucleocytoplasmic transport. NPCs allow the passive diffusion of ions and small molecules and the active, nuclear transport receptor-mediated bidirectional transport of macromolecules such as proteins, RNAs, ribonucleoparticles (RNPs), and ribosomal subunits across the nuclear envelope. Due to its 8-fold rotational symmetry, all subunits are present with 8 copies or multiples thereof. Interacts with NAB2, a hnRNP required for mRNA export. Interacts with MLP2. May be phosphorylated by CDC28.

Its subcellular location is the nucleus. It localises to the nuclear pore complex. Together with the closely related MLP2, involved in the structural and functional organization of perinuclear chromatin. Together with MLP2, associates with the nuclear pore complex and form filamentous structures along the nuclear periphery. Has a role in the localization of Esc1 to nucleolar regions. Together with MLP2, mediates tethering of the some telomeres to the nuclear periphery, probably mediated by YKU70/YKU80 (HDF1/HDF2) heterodimer and show perinuclear location dependent silencing. MLP1 and MLP2 are involved in telomere length regulation but not silencing or telomere anchoring. Recognizes the 5'-splice site of pre-mRNAs and retains unspliced pre-mRNA in the nucleus without affecting splicing itself. In Saccharomyces cerevisiae (strain ATCC 204508 / S288c) (Baker's yeast), this protein is Protein MLP1 (MLP1).